The primary structure comprises 180 residues: UPF0102 protein Tery_0733 (180 aa).

It belongs to the UPF0102 family.

This chain is UPF0102 protein Tery_0733, found in Trichodesmium erythraeum (strain IMS101).